Here is a 247-residue protein sequence, read N- to C-terminus: 3-deoxy-manno-octulosonate cytidylyltransferase (247 aa).

The protein belongs to the KdsB family.

The protein resides in the cytoplasm. It catalyses the reaction 3-deoxy-alpha-D-manno-oct-2-ulosonate + CTP = CMP-3-deoxy-beta-D-manno-octulosonate + diphosphate. The protein operates within nucleotide-sugar biosynthesis; CMP-3-deoxy-D-manno-octulosonate biosynthesis; CMP-3-deoxy-D-manno-octulosonate from 3-deoxy-D-manno-octulosonate and CTP: step 1/1. Its pathway is bacterial outer membrane biogenesis; lipopolysaccharide biosynthesis. In terms of biological role, activates KDO (a required 8-carbon sugar) for incorporation into bacterial lipopolysaccharide in Gram-negative bacteria. This is 3-deoxy-manno-octulosonate cytidylyltransferase from Methylorubrum populi (strain ATCC BAA-705 / NCIMB 13946 / BJ001) (Methylobacterium populi).